Here is a 230-residue protein sequence, read N- to C-terminus: MIKTKVLQAWMGIWLCAVNGLLGSDQDCSDRDPTGSRCSISVEKLLDRAIQHAELIYRISDEARTLFEEMFIPLLIPAHQVHGGNSCTSNLVRVPISKLEIQQISDKWLLHSISILVQVWIEPLADLQDSLDMYDNVPSSLISKTRWMSTKLMNLKQGVLVLMSKMLDEGSVELENNESMLRHIVAPAMAEHVLRDYAVLSCFKKDAHKMETFLKLLRCRQTDNPTCSLF.

Residues 1–23 form the signal peptide; the sequence is MIKTKVLQAWMGIWLCAVNGLLG. Intrachain disulfides connect cysteine 28/cysteine 38, cysteine 87/cysteine 202, and cysteine 219/cysteine 227. N-linked (GlcNAc...) asparagine glycosylation occurs at asparagine 177.

This sequence belongs to the somatotropin/prolactin family.

It is found in the secreted. The protein is Somatolactin of Ictalurus punctatus (Channel catfish).